Here is a 360-residue protein sequence, read N- to C-terminus: Phospho-N-acetylmuramoyl-pentapeptide-transferase (360 aa).

10 consecutive transmembrane segments (helical) span residues 27–47 (GAFLTALIFGFVFGKPLINVL), 69–89 (VGTPTMGGLLIVGALLFSTLM), 93–113 (WDNPFVWLVLFVTMSFGLIGF), 134–154 (LLLGFVIAIVAALWASWNHPA), 168–188 (VLLNLGYLYVPFCICVIVGAA), 199–219 (GLAIMPVMIAAGTLGIIAYAV), 239–259 (ILIFTSALFGGGLGFLWYNAP), 262–282 (AVFMGDTGSLALGGALGAIAI), 288–308 (LVLAIVGGLFVVEALSVIIQV), and 337–357 (TIVIRFWIISLILAMIGLATL).

This sequence belongs to the glycosyltransferase 4 family. MraY subfamily. Mg(2+) serves as cofactor.

Its subcellular location is the cell inner membrane. It catalyses the reaction UDP-N-acetyl-alpha-D-muramoyl-L-alanyl-gamma-D-glutamyl-meso-2,6-diaminopimeloyl-D-alanyl-D-alanine + di-trans,octa-cis-undecaprenyl phosphate = di-trans,octa-cis-undecaprenyl diphospho-N-acetyl-alpha-D-muramoyl-L-alanyl-D-glutamyl-meso-2,6-diaminopimeloyl-D-alanyl-D-alanine + UMP. The protein operates within cell wall biogenesis; peptidoglycan biosynthesis. Catalyzes the initial step of the lipid cycle reactions in the biosynthesis of the cell wall peptidoglycan: transfers peptidoglycan precursor phospho-MurNAc-pentapeptide from UDP-MurNAc-pentapeptide onto the lipid carrier undecaprenyl phosphate, yielding undecaprenyl-pyrophosphoryl-MurNAc-pentapeptide, known as lipid I. The protein is Phospho-N-acetylmuramoyl-pentapeptide-transferase of Ruegeria sp. (strain TM1040) (Silicibacter sp.).